Reading from the N-terminus, the 472-residue chain is Ribosomal protein uS12 methylthiotransferase RimO (472 aa).

An MTTase N-terminal domain is found at Met-1–Arg-114. [4Fe-4S] cluster-binding residues include Cys-10, Cys-46, Cys-78, Cys-171, Cys-175, and Cys-178. A Radical SAM core domain is found at Arg-157–Gln-388. Positions Arg-391–Glu-460 constitute a TRAM domain.

Belongs to the methylthiotransferase family. RimO subfamily. Requires [4Fe-4S] cluster as cofactor.

Its subcellular location is the cytoplasm. It carries out the reaction L-aspartate(89)-[ribosomal protein uS12]-hydrogen + (sulfur carrier)-SH + AH2 + 2 S-adenosyl-L-methionine = 3-methylsulfanyl-L-aspartate(89)-[ribosomal protein uS12]-hydrogen + (sulfur carrier)-H + 5'-deoxyadenosine + L-methionine + A + S-adenosyl-L-homocysteine + 2 H(+). Its function is as follows. Catalyzes the methylthiolation of an aspartic acid residue of ribosomal protein uS12. The polypeptide is Ribosomal protein uS12 methylthiotransferase RimO (Roseiflexus sp. (strain RS-1)).